A 400-amino-acid polypeptide reads, in one-letter code: Phosphoglycerate kinase (400 aa).

Residues 21–23, R36, 59–62, R114, and R147 each bind substrate; these read DLN and HLGR. Residues K202, E329, and 355-358 contribute to the ATP site; that span reads GGDT.

It belongs to the phosphoglycerate kinase family. Monomer.

It is found in the cytoplasm. The enzyme catalyses (2R)-3-phosphoglycerate + ATP = (2R)-3-phospho-glyceroyl phosphate + ADP. Its pathway is carbohydrate degradation; glycolysis; pyruvate from D-glyceraldehyde 3-phosphate: step 2/5. The protein is Phosphoglycerate kinase of Psychrobacter cryohalolentis (strain ATCC BAA-1226 / DSM 17306 / VKM B-2378 / K5).